A 568-amino-acid chain; its full sequence is Sphingosine-1-phosphate lyase 1 (568 aa).

The Lumenal portion of the chain corresponds to 1–40; sequence MPSTDLLMLKAFEPYLEILEVYSTKAKNYVNGHCTKYEPW. The helical; Signal-anchor for type III membrane protein transmembrane segment at 41-61 threads the bilayer; that stretch reads QLIAWSVVWTLLIVWGYEFVF. Over 62 to 568 the chain is Cytoplasmic; that stretch reads QPESLWSRFK…SQMNGSPKPH (507 aa). Lys353 carries the N6-(pyridoxal phosphate)lysine; alternate modification. Position 353 is an N6-acetyllysine; alternate (Lys353). Residues Tyr356 and Tyr366 each carry the 3'-nitrotyrosine modification. A Phosphoserine modification is found at Ser564.

The protein belongs to the group II decarboxylase family. Sphingosine-1-phosphate lyase subfamily. Homodimer. The cofactor is pyridoxal 5'-phosphate. As to expression, ubiquitously expressed. Expressed in fetal and adult adrenal gland (at protein level).

Its subcellular location is the endoplasmic reticulum membrane. The catalysed reaction is sphinganine 1-phosphate = hexadecanal + phosphoethanolamine. It carries out the reaction sphing-4-enine 1-phosphate = (2E)-hexadecenal + phosphoethanolamine. The protein operates within lipid metabolism; sphingolipid metabolism. Functionally, cleaves phosphorylated sphingoid bases (PSBs), such as sphingosine-1-phosphate, into fatty aldehydes and phosphoethanolamine. Elevates stress-induced ceramide production and apoptosis. Required for global lipid homeostasis in liver and cholesterol homeostasis in fibroblasts. Involved in the regulation of pro-inflammatory response and neutrophil trafficking. Modulates neuronal autophagy via phosphoethanolamine production which regulates accumulation of aggregate-prone proteins such as APP. Seems to play a role in establishing neuronal contact sites and axonal maintenance. The sequence is that of Sphingosine-1-phosphate lyase 1 from Homo sapiens (Human).